The following is a 193-amino-acid chain: Ion-translocating oxidoreductase complex subunit A (193 aa).

Helical transmembrane passes span 5-25 (LLLL…FLGL), 39-59 (IGMG…SYLI), 63-83 (ILAP…VIAV), 102-122 (VLGI…VALL), 134-154 (IIYG…FSAM), and 171-191 (SIAM…TGLV).

It belongs to the NqrDE/RnfAE family. In terms of assembly, the complex is composed of six subunits: RnfA, RnfB, RnfC, RnfD, RnfE and RnfG.

The protein resides in the cell inner membrane. Its function is as follows. Part of a membrane-bound complex that couples electron transfer with translocation of ions across the membrane. This chain is Ion-translocating oxidoreductase complex subunit A, found in Aliivibrio salmonicida (strain LFI1238) (Vibrio salmonicida (strain LFI1238)).